A 91-amino-acid polypeptide reads, in one-letter code: Large ribosomal subunit protein bL31B-1 (91 aa).

The protein belongs to the bacterial ribosomal protein bL31 family. Type B subfamily. As to quaternary structure, part of the 50S ribosomal subunit.

This is Large ribosomal subunit protein bL31B-1 from Streptomyces avermitilis (strain ATCC 31267 / DSM 46492 / JCM 5070 / NBRC 14893 / NCIMB 12804 / NRRL 8165 / MA-4680).